Here is a 247-residue protein sequence, read N- to C-terminus: Triosephosphate isomerase (247 aa).

8–10 (NWK) is a substrate binding site. Histidine 95 acts as the Electrophile in catalysis. Glutamate 162 (proton acceptor) is an active-site residue. Substrate contacts are provided by glycine 168 and serine 207.

It belongs to the triosephosphate isomerase family. As to quaternary structure, homodimer.

The protein resides in the cytoplasm. It catalyses the reaction D-glyceraldehyde 3-phosphate = dihydroxyacetone phosphate. It functions in the pathway carbohydrate biosynthesis; gluconeogenesis. It participates in carbohydrate degradation; glycolysis; D-glyceraldehyde 3-phosphate from glycerone phosphate: step 1/1. Involved in the gluconeogenesis. Catalyzes stereospecifically the conversion of dihydroxyacetone phosphate (DHAP) to D-glyceraldehyde-3-phosphate (G3P). This Gluconacetobacter diazotrophicus (strain ATCC 49037 / DSM 5601 / CCUG 37298 / CIP 103539 / LMG 7603 / PAl5) protein is Triosephosphate isomerase.